Consider the following 480-residue polypeptide: UDP-N-acetylmuramate--L-alanine ligase (480 aa).

ATP is bound at residue 122 to 128 (GTHGKTT).

Belongs to the MurCDEF family.

The protein resides in the cytoplasm. It carries out the reaction UDP-N-acetyl-alpha-D-muramate + L-alanine + ATP = UDP-N-acetyl-alpha-D-muramoyl-L-alanine + ADP + phosphate + H(+). It participates in cell wall biogenesis; peptidoglycan biosynthesis. In terms of biological role, cell wall formation. In Pseudomonas paraeruginosa (strain DSM 24068 / PA7) (Pseudomonas aeruginosa (strain PA7)), this protein is UDP-N-acetylmuramate--L-alanine ligase.